The following is a 119-amino-acid chain: MNLANYFPVLLFILVGIGVGLVPMFLGKILAPSKPDAEKLSPYECGFEAFEDARMKFDVRYYLIAILFILFDLETAFLFPWGVALRDIGWFGYASMVIFLLEFIVGFVYIWKKGALDWE.

3 helical membrane passes run 7–27, 63–83, and 88–108; these read FPVL…MFLG, LIAI…PWGV, and IGWF…VGFV.

Belongs to the complex I subunit 3 family. NDH-1 is composed of 14 different subunits. Subunits NuoA, H, J, K, L, M, N constitute the membrane sector of the complex.

It is found in the cell membrane. It catalyses the reaction a quinone + NADH + 5 H(+)(in) = a quinol + NAD(+) + 4 H(+)(out). Functionally, NDH-1 shuttles electrons from NADH, via FMN and iron-sulfur (Fe-S) centers, to quinones in the respiratory chain. The immediate electron acceptor for the enzyme in this species is believed to be ubiquinone. Couples the redox reaction to proton translocation (for every two electrons transferred, four hydrogen ions are translocated across the cytoplasmic membrane), and thus conserves the redox energy in a proton gradient. The sequence is that of NADH-quinone oxidoreductase subunit A from Polynucleobacter asymbioticus (strain DSM 18221 / CIP 109841 / QLW-P1DMWA-1) (Polynucleobacter necessarius subsp. asymbioticus).